We begin with the raw amino-acid sequence, 61 residues long: MIFAIDLIKSNCKREILKIKKIKINYLFYGNCRYLINMINLKSSTTRILQPLDSVVISHDS.

This is an uncharacterized protein from Dictyostelium discoideum (Social amoeba).